A 385-amino-acid chain; its full sequence is Polyketide synthase 4 (385 aa).

The active site involves Cys-157.

It belongs to the thiolase-like superfamily. Chalcone/stilbene synthases family. Expressed in glandular trichomes.

The protein localises to the cytoplasm. Functionally, polyketide synthase responsible for the biosynthesis of secondary metabolites. This Cannabis sativa (Hemp) protein is Polyketide synthase 4 (PKSG4).